We begin with the raw amino-acid sequence, 370 residues long: Cobalt-precorrin-5B C(1)-methyltransferase (370 aa).

It belongs to the CbiD family.

It carries out the reaction Co-precorrin-5B + S-adenosyl-L-methionine = Co-precorrin-6A + S-adenosyl-L-homocysteine. It functions in the pathway cofactor biosynthesis; adenosylcobalamin biosynthesis; cob(II)yrinate a,c-diamide from sirohydrochlorin (anaerobic route): step 6/10. In terms of biological role, catalyzes the methylation of C-1 in cobalt-precorrin-5B to form cobalt-precorrin-6A. The sequence is that of Cobalt-precorrin-5B C(1)-methyltransferase from Pseudomonas syringae pv. syringae (strain B728a).